The chain runs to 122 residues: Large ribosomal subunit protein uL24 (122 aa).

The protein belongs to the universal ribosomal protein uL24 family. As to quaternary structure, part of the 50S ribosomal subunit.

Functionally, one of two assembly initiator proteins, it binds directly to the 5'-end of the 23S rRNA, where it nucleates assembly of the 50S subunit. Its function is as follows. Located at the polypeptide exit tunnel on the outside of the subunit. The polypeptide is Large ribosomal subunit protein uL24 (Pyrobaculum arsenaticum (strain DSM 13514 / JCM 11321 / PZ6)).